A 967-amino-acid polypeptide reads, in one-letter code: RNA polymerase-associated protein RapA (967 aa).

Residues 163 to 332 (EVGRRHAPRV…FARLRLLDPD (170 aa)) enclose the Helicase ATP-binding domain. 176–183 (DEVGLGKT) contributes to the ATP binding site. The short motif at 278-281 (DEAH) is the DEAH box element. Residues 491–639 (RVDWLIDFLK…LCAFELTCPG (149 aa)) form the Helicase C-terminal domain.

The protein belongs to the SNF2/RAD54 helicase family. RapA subfamily. In terms of assembly, interacts with the RNAP. Has a higher affinity for the core RNAP than for the holoenzyme. Its ATPase activity is stimulated by binding to RNAP.

Transcription regulator that activates transcription by stimulating RNA polymerase (RNAP) recycling in case of stress conditions such as supercoiled DNA or high salt concentrations. Probably acts by releasing the RNAP, when it is trapped or immobilized on tightly supercoiled DNA. Does not activate transcription on linear DNA. Probably not involved in DNA repair. This is RNA polymerase-associated protein RapA from Shewanella amazonensis (strain ATCC BAA-1098 / SB2B).